Here is a 390-residue protein sequence, read N- to C-terminus: Succinyl-diaminopimelate desuccinylase (390 aa).

Position 74 (H74) interacts with Zn(2+). D76 is a catalytic residue. D107 is a Zn(2+) binding site. The active-site Proton acceptor is E140. E141, E169, and H363 together coordinate Zn(2+).

This sequence belongs to the peptidase M20A family. DapE subfamily. As to quaternary structure, homodimer. Zn(2+) is required as a cofactor. Requires Co(2+) as cofactor.

It carries out the reaction N-succinyl-(2S,6S)-2,6-diaminopimelate + H2O = (2S,6S)-2,6-diaminopimelate + succinate. It functions in the pathway amino-acid biosynthesis; L-lysine biosynthesis via DAP pathway; LL-2,6-diaminopimelate from (S)-tetrahydrodipicolinate (succinylase route): step 3/3. Its function is as follows. Catalyzes the hydrolysis of N-succinyl-L,L-diaminopimelic acid (SDAP), forming succinate and LL-2,6-diaminopimelate (DAP), an intermediate involved in the bacterial biosynthesis of lysine and meso-diaminopimelic acid, an essential component of bacterial cell walls. The protein is Succinyl-diaminopimelate desuccinylase of Bartonella henselae (strain ATCC 49882 / DSM 28221 / CCUG 30454 / Houston 1) (Rochalimaea henselae).